The sequence spans 218 residues: Thiopurine S-methyltransferase (218 aa).

Residues W10, L45, E66, and R123 each contribute to the S-adenosyl-L-methionine site.

It belongs to the class I-like SAM-binding methyltransferase superfamily. TPMT family.

It is found in the cytoplasm. It catalyses the reaction S-adenosyl-L-methionine + a thiopurine = S-adenosyl-L-homocysteine + a thiopurine S-methylether.. This chain is Thiopurine S-methyltransferase, found in Shewanella baltica (strain OS223).